We begin with the raw amino-acid sequence, 66 residues long: ATP synthase subunit c (66 aa).

2 helical membrane-spanning segments follow: residues 3–23 (LTFL…GLLM) and 45–65 (FLGV…SFII).

The protein belongs to the ATPase C chain family. F-type ATPases have 2 components, F(1) - the catalytic core - and F(0) - the membrane proton channel. F(1) has five subunits: alpha(3), beta(3), gamma(1), delta(1), epsilon(1). F(0) has three main subunits: a(1), b(2) and c(10-14). The alpha and beta chains form an alternating ring which encloses part of the gamma chain. F(1) is attached to F(0) by a central stalk formed by the gamma and epsilon chains, while a peripheral stalk is formed by the delta and b chains.

It localises to the cell membrane. Its function is as follows. F(1)F(0) ATP synthase produces ATP from ADP in the presence of a proton or sodium gradient. F-type ATPases consist of two structural domains, F(1) containing the extramembraneous catalytic core and F(0) containing the membrane proton channel, linked together by a central stalk and a peripheral stalk. During catalysis, ATP synthesis in the catalytic domain of F(1) is coupled via a rotary mechanism of the central stalk subunits to proton translocation. Functionally, key component of the F(0) channel; it plays a direct role in translocation across the membrane. A homomeric c-ring of between 10-14 subunits forms the central stalk rotor element with the F(1) delta and epsilon subunits. This chain is ATP synthase subunit c, found in Streptococcus pneumoniae serotype 19F (strain G54).